The primary structure comprises 456 residues: Na(+)/H(+) antiporter NhaA 3 (456 aa).

A run of 11 helical transmembrane segments spans residues Ile32–Asn52, Gly87–Gly107, Met114–Leu134, Gly145–Gly165, Val174–Gly194, Thr202–Val222, Ala233–Leu253, Trp318–Ile338, Leu347–Leu367, Trp382–Ile402, and Leu417–Leu437.

Belongs to the NhaA Na(+)/H(+) (TC 2.A.33) antiporter family.

The protein localises to the cell inner membrane. It catalyses the reaction Na(+)(in) + 2 H(+)(out) = Na(+)(out) + 2 H(+)(in). Na(+)/H(+) antiporter that extrudes sodium in exchange for external protons. The chain is Na(+)/H(+) antiporter NhaA 3 from Acidiphilium cryptum (strain JF-5).